The following is a 200-amino-acid chain: Pyrrolidone-carboxylate peptidase (200 aa).

Catalysis depends on residues Glu-78, Cys-141, and His-165.

Belongs to the peptidase C15 family. Homotetramer.

It localises to the cytoplasm. It catalyses the reaction Release of an N-terminal pyroglutamyl group from a polypeptide, the second amino acid generally not being Pro.. Functionally, removes 5-oxoproline from various penultimate amino acid residues except L-proline. This chain is Pyrrolidone-carboxylate peptidase, found in Lactobacillus acidophilus (strain ATCC 700396 / NCK56 / N2 / NCFM).